The chain runs to 627 residues: MASVAGDSAMEVVPALAEEAAAEATGPSCLVQLPGEVLEYILCSGSLTALDIGRVSSTCRRLREVCQSSGQVWKEQFRVRWPSLMKHYSPTDYVNWLEEYKVRQKAGLEARKIVASFSKRFFSEHVPCNGFSDIENLEGPEIFFEDELVCILNMEGRKALTWKYYAKKILYYLRQQKILNNLKAFLQQPDDYESYLEGAVYIDQYCNPLSDISFRDIQAQIHSIVELVCKTLRGINSRHPSLTFRAGESSMIMEIELQSQVLDAINYVLYDQLKFKGNRMDYYNALNLYMHQVLTRRTGIPISMSLLYLTVARQLGVPLEPVNFPSHFLLRWCQGAEGATLDIFDYIYIDAFGKGKQLTVKECEYLIGQHVTAALYGVVNVKKVLQRMVGNLLSLGKREGIDQSYQLLRDSLDLYLAMYPDQVQLLLLQARLYFHLGIWPEKSFCLVLKVLDILQHIQTLDPGQHGAVGYLVQHTLEHIERKKEEVGVEVKLRSEEKHRDVCYSIGLVMKHKRYGYNCVIYGWDPTCMMGHEWIRNMNVHSLPHGHHQPFYNVLVEDGSCRYAAQENLEYNVEPQEISHPDVGRYFSEFTGTHYIPNAELEIRYPEDLEFVYETVQNIYSAKEDTAE.

The F-box domain maps to 27-76; it reads PSCLVQLPGEVLEYILCSGSLTALDIGRVSSTCRRLREVCQSSGQVWKEQ.

Directly interacts with SKP1 and CUL1.

Functionally, substrate-recognition component of the SCF (SKP1-CUL1-F-box protein)-type E3 ubiquitin ligase complex. The sequence is that of F-box only protein 21 (Fbxo21) from Mus musculus (Mouse).